The primary structure comprises 332 residues: Biotin synthase (332 aa).

The 231-residue stretch at 52 to 282 folds into the Radical SAM core domain; the sequence is FPENEVEFCS…KAELRLCGGR (231 aa). Residues cysteine 70, cysteine 74, and cysteine 77 each contribute to the [4Fe-4S] cluster site. Positions 114, 147, 207, and 277 each coordinate [2Fe-2S] cluster.

Belongs to the radical SAM superfamily. Biotin synthase family. In terms of assembly, homodimer. It depends on [4Fe-4S] cluster as a cofactor. Requires [2Fe-2S] cluster as cofactor.

The catalysed reaction is (4R,5S)-dethiobiotin + (sulfur carrier)-SH + 2 reduced [2Fe-2S]-[ferredoxin] + 2 S-adenosyl-L-methionine = (sulfur carrier)-H + biotin + 2 5'-deoxyadenosine + 2 L-methionine + 2 oxidized [2Fe-2S]-[ferredoxin]. It functions in the pathway cofactor biosynthesis; biotin biosynthesis; biotin from 7,8-diaminononanoate: step 2/2. Functionally, catalyzes the conversion of dethiobiotin (DTB) to biotin by the insertion of a sulfur atom into dethiobiotin via a radical-based mechanism. This is Biotin synthase from Aquifex aeolicus (strain VF5).